Reading from the N-terminus, the 453-residue chain is Ribosomal protein uS12 methylthiotransferase RimO (453 aa).

Positions 5-120 (PKVGFVSLGC…VMQAVHSHLP (116 aa)) constitute an MTTase N-terminal domain. [4Fe-4S] cluster contacts are provided by cysteine 14, cysteine 50, cysteine 79, cysteine 151, cysteine 155, and cysteine 158. One can recognise a Radical SAM core domain in the interval 137-383 (LTPRHYAYLK…EVAEEVSAHR (247 aa)). A TRAM domain is found at 385 to 453 (QRKVGKTLKV…ADGHDLWGEV (69 aa)).

Belongs to the methylthiotransferase family. RimO subfamily. [4Fe-4S] cluster is required as a cofactor.

The protein resides in the cytoplasm. The catalysed reaction is L-aspartate(89)-[ribosomal protein uS12]-hydrogen + (sulfur carrier)-SH + AH2 + 2 S-adenosyl-L-methionine = 3-methylsulfanyl-L-aspartate(89)-[ribosomal protein uS12]-hydrogen + (sulfur carrier)-H + 5'-deoxyadenosine + L-methionine + A + S-adenosyl-L-homocysteine + 2 H(+). Its function is as follows. Catalyzes the methylthiolation of an aspartic acid residue of ribosomal protein uS12. The sequence is that of Ribosomal protein uS12 methylthiotransferase RimO from Burkholderia cenocepacia (strain ATCC BAA-245 / DSM 16553 / LMG 16656 / NCTC 13227 / J2315 / CF5610) (Burkholderia cepacia (strain J2315)).